We begin with the raw amino-acid sequence, 532 residues long: Neutral amino acid transporter A (532 aa).

Residue Met1 is modified to N-acetylmethionine. A compositionally biased stretch (polar residues) spans 1–10 (MEKSNETNGY). Residues 1-25 (MEKSNETNGYLDSAQAGPAAGPGAP) form a disordered region. Over 1–41 (MEKSNETNGYLDSAQAGPAAGPGAPGTAAGRARRCAGFLRR) the chain is Cytoplasmic. Positions 14 to 25 (AQAGPAAGPGAP) are enriched in low complexity. 3 helical membrane passes run 42–62 (QALV…GAAL), 88–108 (MIIL…LDAS), and 119–139 (AYFG…AFII). The Extracellular portion of the chain corresponds to 140 to 216 (KPGSGAQTLQ…VTHEKIPIGT (77 aa)). N-linked (GlcNAc...) asparagine glycosylation is found at Asn201 and Asn206. The next 6 membrane-spanning stretches (helical) occupy residues 217–237 (EIEG…GVAL), 257–277 (ATMV…MFLV), 298–318 (IFAS…LIYF), 328–348 (FLLG…SSAT), 373–393 (IGAT…AVFI), and 418–438 (VGAA…LEAI). The tract at residues 500–532 (CKSEEETSPLVTHQNPAGPVASAPELESKESVL) is disordered. Phosphoserine is present on residues Ser507, Ser527, and Ser530.

This sequence belongs to the dicarboxylate/amino acid:cation symporter (DAACS) (TC 2.A.23) family. SLC1A4 subfamily. In terms of tissue distribution, expressed mostly in brain, muscle, and pancreas but detected in all tissues examined.

It localises to the membrane. The protein resides in the melanosome. It catalyses the reaction L-threonine(in) + Na(+)(in) = L-threonine(out) + Na(+)(out). It carries out the reaction L-serine(in) + Na(+)(in) = L-serine(out) + Na(+)(out). The catalysed reaction is L-cysteine(in) + Na(+)(in) = L-cysteine(out) + Na(+)(out). The enzyme catalyses L-alanine(in) + Na(+)(in) = L-alanine(out) + Na(+)(out). It catalyses the reaction L-proline(in) + Na(+)(in) = L-proline(out) + Na(+)(out). It carries out the reaction 4-hydroxy-L-proline(in) + Na(+)(in) = 4-hydroxy-L-proline(out) + Na(+)(out). Functionally, sodium-dependent neutral amino-acid transporter that mediates transport of alanine, serine, cysteine, proline, hydroxyproline and threonine. The sequence is that of Neutral amino acid transporter A from Homo sapiens (Human).